Reading from the N-terminus, the 64-residue chain is Large ribosomal subunit protein bL35 (64 aa).

Positions methionine 1–arginine 44 are enriched in basic residues. Positions methionine 1–glutamine 48 are disordered.

It belongs to the bacterial ribosomal protein bL35 family.

The chain is Large ribosomal subunit protein bL35 from Marinomonas sp. (strain MWYL1).